Here is a 335-residue protein sequence, read N- to C-terminus: MADVATKHPMEDEVKKTEASSLVGKLETDVEIKASADKFHHMFAGKPHHVSKASPGNIQGCDLHEGDWGTVGSIVFWNYVHDGEAKVAKERIEAVEPDKNLITFRVIEGDLMKEYKSFLLTIQVTPKPGGPGSIVHWHLEYEKISEEVAHPETLLQFCVEVSKEIDEHLLAEEEEVKTPETPSLVGKLETDVEIKASAEKFHHMFAGKPHHVSKASPGNIQGCDLHEGDWGQVGSIVFWNYVHDREAKVAKERIEAVEPNKNLITFRVIDGDLMKEYKSFLLTIQVTPKLGGPGSIVHWHLEYEKISEEVAHPETLLQFCVEVSKEIDEHLLAEE.

It belongs to the MLP family.

In terms of biological role, can bind steroids (in vitro), and may also bind other types of hydrophobic ligands. The chain is MLP-like protein 28 (MLP28) from Arabidopsis thaliana (Mouse-ear cress).